The chain runs to 190 residues: Ribosome maturation factor RimM (190 aa).

Residues 95 to 171 form the PRC barrel domain; sequence DPDEFYDHEL…VVMIEPPEGL (77 aa). The disordered stretch occupies residues 169-190; sequence EGLLDPDFGDKSNSDNSNSDND.

Belongs to the RimM family. As to quaternary structure, binds ribosomal protein uS19.

It localises to the cytoplasm. In terms of biological role, an accessory protein needed during the final step in the assembly of 30S ribosomal subunit, possibly for assembly of the head region. Essential for efficient processing of 16S rRNA. May be needed both before and after RbfA during the maturation of 16S rRNA. It has affinity for free ribosomal 30S subunits but not for 70S ribosomes. This Rhodococcus erythropolis (strain PR4 / NBRC 100887) protein is Ribosome maturation factor RimM.